A 248-amino-acid polypeptide reads, in one-letter code: MIDRSLIVFFTACYPTAEKTVEFMLTAAESGADVIELGVPFSDPVADGKTIQESYVRALRNFRVERVFEIAKAFRAESDKPLVLMSYYNPIYRRGVESFVEKAYSSGIDAMLVVDLPYDEAGDFVEVCSRTGMKNVFLAAPNTPEDRLRAMDELSAFVYLVSTYGVTGERDRISPLAFEALKRAKGICRKPVAVGFGVSKADHVRQLISAGADGVVVGSAFVRLINEKGERATEDIRALTENLRSGLV.

Active-site proton acceptor residues include E36 and D47.

It belongs to the TrpA family. As to quaternary structure, tetramer of two alpha and two beta chains.

It carries out the reaction (1S,2R)-1-C-(indol-3-yl)glycerol 3-phosphate + L-serine = D-glyceraldehyde 3-phosphate + L-tryptophan + H2O. The protein operates within amino-acid biosynthesis; L-tryptophan biosynthesis; L-tryptophan from chorismate: step 5/5. The alpha subunit is responsible for the aldol cleavage of indoleglycerol phosphate to indole and glyceraldehyde 3-phosphate. This chain is Tryptophan synthase alpha chain, found in Archaeoglobus fulgidus (strain ATCC 49558 / DSM 4304 / JCM 9628 / NBRC 100126 / VC-16).